The chain runs to 1116 residues: uncharacterized protein (1116 aa).

EF-hand domains follow at residues 8–43 (EEQT…SGLA), 42–77 (LAPQ…VALA), 166–201 (LSTE…INLL), and 292–327 (LPED…IKLK). 3 consecutive EH domains span residues 9-106 (EQTA…DSSK), 134-224 (EMTR…AAST), and 259-348 (DLTS…VAPL). 5 residues coordinate Ca(2+): D305, N307, N309, K311, and E316. Disordered stretches follow at residues 360-454 (PSVV…NSPT), 703-774 (SVNL…ASTV), 812-890 (TSLS…NTSA), 909-978 (PFAT…SPQI), 1004-1024 (TTTH…ENQY), 1044-1066 (SNEV…DDEL), and 1095-1116 (QAAE…AGHH). The span at 371–381 (NPNPTLAPNPT) shows a compositional bias: pro residues. A compositionally biased stretch (polar residues) spans 401 to 416 (FSPTLAPQHTSSNATK). Residues 565 to 707 (KAQTEQVNRE…EDGLKSVNLT (143 aa)) adopt a coiled-coil conformation. A compositionally biased stretch (polar residues) spans 723–749 (SFTSNGITTDKPTLPDTTSSVPTQHNS). Composition is skewed to low complexity over residues 755–774 (NTLR…ASTV) and 812–827 (TSLS…SLDS). Residues 864–890 (SKLTGSARNTAEPVENTSAEPIENTSA) show a composition bias toward polar residues. Acidic residues predominate over residues 957–969 (EIDDDESSSDEEP). Composition is skewed to acidic residues over residues 1055–1066 (TANESDNDDDEL) and 1104–1116 (NSST…AGHH).

Its subcellular location is the cytoplasm. The protein resides in the cytoskeleton. This is an uncharacterized protein from Schizosaccharomyces pombe (strain 972 / ATCC 24843) (Fission yeast).